A 149-amino-acid polypeptide reads, in one-letter code: MADQLTEEQIAEFKEAFSLFDKDGDGTITTKELGTVMRSLGQNPTEAELQDMINEVDADGNGTIDFPEFLTMMARKMKDTDSEEEIREAFRVFDKDGNGFISAAELRHVMTNLGEKLTDEEVDEMIREADIDGDGQVNYEEFVTMMTTK.

The residue at position 2 (alanine 2) is an N-acetylalanine. 4 EF-hand domains span residues 8–43 (EQIA…LGQN), 44–79 (PTEA…KMKD), 81–116 (DSEE…LGEK), and 117–149 (LTDE…MTTK). Residues aspartate 21, aspartate 23, aspartate 25, threonine 27, glutamate 32, aspartate 57, aspartate 59, asparagine 61, threonine 63, glutamate 68, aspartate 94, aspartate 96, asparagine 98, and glutamate 105 each coordinate Ca(2+). Residue lysine 116 is modified to N6,N6,N6-trimethyllysine. Residues aspartate 130, aspartate 132, aspartate 134, glutamine 136, and glutamate 141 each contribute to the Ca(2+) site.

This sequence belongs to the calmodulin family. Interacts (in the presence of Ca(2+)) with pde-1, madf-3, rpl-7A, tax-6, efk-1, npp-1, obr-4, sos-1, akt-1, unc-13, tag-196, ugt-48, nmy-2, F27D4.4, ddx-23, efa-6 and R11H6.4.

Functionally, calmodulin mediates the control of a large number of enzymes, ion channels and other proteins by Ca(2+). Among the enzymes to be stimulated by the calmodulin-Ca(2+) complex are a number of protein kinases and phosphatases. In Caenorhabditis elegans, this protein is Calmodulin (cmd-1).